Consider the following 480-residue polypeptide: Molybdate-anion transporter (480 aa).

12 consecutive transmembrane segments (helical) span residues 1–21 (MFVTAYFAVISLLALCVGLEL), 44–63 (ATFLRAYLLALWADWLQGPY), 78–98 (IAILYVCGLASCVLFAPFSGW), 129–149 (FVLIVGRILGGLSTSLLTTTF), 177–197 (TWNHGLAVGAGLVANLLAEWL), 199–219 (LGPVAPFLLAVPFLACCAWFV), 274–294 (VMLLGGVQALFESVLYIFIFL), 304–324 (SPLGIVFSCFMAASMVGSLLF), 339–359 (VLCVAVLMAFFSFFMLTFSTV), 369–389 (FLAFLLLELACGLYFPALNFL), 401–421 (SVLAWFRLPLHLLACLGLLAL), and 441–461 (FGGCAVMMLAALMAVVSLFTL).

This sequence belongs to the major facilitator superfamily.

It localises to the cell membrane. Functionally, mediates high-affinity intracellular uptake of the rare oligo-element molybdenum. This chain is Molybdate-anion transporter (mfsd5), found in Takifugu rubripes (Japanese pufferfish).